The primary structure comprises 229 residues: uncharacterized protein (229 aa).

The 68-residue stretch at 2–69 (QRLAKLISNA…KSRLWIYYKP (68 aa)) folds into the S4 RNA-binding domain. Aspartate 102 (nucleophile) is an active-site residue.

The protein belongs to the pseudouridine synthase RsuA family.

The enzyme catalyses a uridine in RNA = a pseudouridine in RNA. This is an uncharacterized protein from Rickettsia bellii (strain RML369-C).